We begin with the raw amino-acid sequence, 142 residues long: Low molecular weight protein-tyrosine-phosphatase Ptp (142 aa).

Cys10 acts as the Nucleophile in catalysis. Arg16 is a catalytic residue. Asp115 acts as the Proton donor in catalysis.

It belongs to the low molecular weight phosphotyrosine protein phosphatase family.

The catalysed reaction is O-phospho-L-tyrosyl-[protein] + H2O = L-tyrosyl-[protein] + phosphate. Its pathway is glycan metabolism; exopolysaccharide biosynthesis. With respect to regulation, inhibited by ammonium molybdate, sodium orthovanadate, N-ethylmaleimide and iodoacetic acid. Dephosphorylates ptk. May be involved in the production and the transport of exopolysaccharides. This Acinetobacter johnsonii protein is Low molecular weight protein-tyrosine-phosphatase Ptp (ptp).